The chain runs to 319 residues: Cytochrome c biogenesis protein CcsA (319 aa).

Helical transmembrane passes span 9-29, 44-64, 71-91, 143-163, 225-245, 259-273, and 286-306; these read ILTH…LITL, GVIG…AYSG, LYES…FPYF, MVLG…LLVI, IISL…VWAN, TWAF…IYLH, and AIVA…VNLL.

The protein belongs to the CcmF/CycK/Ccl1/NrfE/CcsA family. In terms of assembly, may interact with Ccs1.

It is found in the plastid. It localises to the chloroplast thylakoid membrane. In terms of biological role, required during biogenesis of c-type cytochromes (cytochrome c6 and cytochrome f) at the step of heme attachment. The chain is Cytochrome c biogenesis protein CcsA from Oenothera glazioviana (Large-flowered evening primrose).